The sequence spans 342 residues: BAG family molecular chaperone regulator 1 (342 aa).

The interval 1–41 is disordered; the sequence is MMKMMRNKPTNLPTAGMTNGGRGSGGGGGGGGRESGGRDLE. A compositionally biased stretch (polar residues) spans 8–17; the sequence is KPTNLPTAGM. Positions 18–34 are enriched in gly residues; that stretch reads TNGGRGSGGGGGGGGRE. One can recognise a Ubiquitin-like domain in the interval 65-141; the sequence is PMIRVRIKYG…MVLIEDPLSQ (77 aa). Positions 160-238 constitute a BAG domain; the sequence is AISDISLEVD…NYVETLDALK (79 aa). Ser-298 carries the post-translational modification Phosphoserine.

Binds to the ATPase domain of HSP70/HSC70 chaperones.

Functionally, co-chaperone that regulates diverse cellular pathways, such as programmed cell death and stress responses. In Arabidopsis thaliana (Mouse-ear cress), this protein is BAG family molecular chaperone regulator 1 (BAG1).